The sequence spans 332 residues: Tsukubadiene synthase (332 aa).

Residues aspartate 75 and glutamate 80 each coordinate Mg(2+). The DDXXXE motif motif lies at 75-80 (DDHLDE). Arginine 165 serves as a coordination point for substrate. Mg(2+) is bound by residues serine 212, serine 216, and glutamate 220. An SXXXSXXXE motif motif is present at residues 212 to 220 (SDLHSFQLE). 298–299 (RY) provides a ligand contact to substrate.

Belongs to the terpene synthase family. Mg(2+) is required as a cofactor.

The catalysed reaction is (2E,6E,10E)-geranylgeranyl diphosphate = tsukubadiene + diphosphate. Catalyzes the formation of the 5-9-5 ring skeleton (3S,6S,11R,14S)-tsukubadiene from geranylgeranyl diphosphate (GGPP) via a 1,11-cyclization and a 10Re,14Re-cyclization. The sequence is that of Tsukubadiene synthase from Streptomyces tsukubensis (strain DSM 42081 / NBRC 108919 / NRRL 18488 / 9993).